Consider the following 37-residue polypeptide: Calcitonin gene-related peptide (37 aa).

Cysteine 2 and cysteine 7 are disulfide-bonded. At phenylalanine 37 the chain carries Phenylalanine amide.

Belongs to the calcitonin family.

CGRP induces vasodilation. It dilates a variety of vessels including the coronary, cerebral and systemic vasculature. Its abundance in the CNS also points toward a neurotransmitter or neuromodulator role. In Pelophylax ridibundus (Marsh frog), this protein is Calcitonin gene-related peptide.